We begin with the raw amino-acid sequence, 261 residues long: Ribonuclease PH (261 aa).

Phosphate-binding positions include Arg87 and 125–127; that span reads GTR.

This sequence belongs to the RNase PH family. In terms of assembly, homohexameric ring arranged as a trimer of dimers.

It catalyses the reaction tRNA(n+1) + phosphate = tRNA(n) + a ribonucleoside 5'-diphosphate. Its function is as follows. Phosphorolytic 3'-5' exoribonuclease that plays an important role in tRNA 3'-end maturation. Removes nucleotide residues following the 3'-CCA terminus of tRNAs; can also add nucleotides to the ends of RNA molecules by using nucleoside diphosphates as substrates, but this may not be physiologically important. Probably plays a role in initiation of 16S rRNA degradation (leading to ribosome degradation) during starvation. This is Ribonuclease PH from Desulforudis audaxviator (strain MP104C).